The following is a 227-amino-acid chain: Uracil-DNA glycosylase (227 aa).

Aspartate 68 acts as the Proton acceptor in catalysis.

The protein belongs to the uracil-DNA glycosylase (UDG) superfamily. UNG family.

It is found in the cytoplasm. The catalysed reaction is Hydrolyzes single-stranded DNA or mismatched double-stranded DNA and polynucleotides, releasing free uracil.. Its function is as follows. Excises uracil residues from the DNA which can arise as a result of misincorporation of dUMP residues by DNA polymerase or due to deamination of cytosine. The sequence is that of Uracil-DNA glycosylase from Mycobacterium ulcerans (strain Agy99).